We begin with the raw amino-acid sequence, 733 residues long: MGKEKFHKSQHWGFCNNVRMLVGEDKPGIGGELLFGQKIKPKYSVFPKGMGTDSPSWVAFDKQVLSFDAYLEDEVPDKSQENYRIRRYKIYFYLEDDTVEVNEPVLQNSGLPQGIFIRRHRISLPPPNEDQFYTVHHFNVNTDIVFYGRTFKVYDCDAFTKNFLTKIGVKLNPPGQCPEDPYMKTRREKLDCMEPICPYESFDTLKQFLEYDRKVLRFFCVWDDSGSVFGDRRELILHYFLSDDTIEIKEVLPHNSGRDAMSLFLQRRKLPKYGPPGVYQPGQLTDQTVLNVYGGYSETRVYGFLLDKYQLGKLDQEFYKDTDLSIGTTINVWGRKVLLCDCDDFTKTYYRTKYGIENFTSIPCKAPSPPKIERKFPPYTGFGSEEDSLRSCIGLMPTPHQRNFKKFIEFDSYGNISNTLRFFAKLITHKCADVERMFVISYFLSDDTISVFEPIERNSGYTGGMFLKRVRVKKPGQEVFKSEFSEYIKAEELYVGAKVNVNGYLFFLVNADEYTLNYMERNSDKFPLSSIELVIQKLKEEECKSRELKQVFTAADCMHTKMVDFNTFREIMMNLTVGKLTDQEVITIARRYRVPEDPCPHRNVLVAQAHEQLKKNAFENFERLIAMCVYEDREKKKVLPSKDIKRLCKSSRLPLNEDLLGSLLSGFEDSEKQINYESFFCALNWRVNPVPVLEVASYIKERCEDEWLGMPSPIPVKYIYYLNLLKDVFGVDE.

DM10 domains lie at 61-168 (DKQV…TKIG), 212-354 (DRKV…RTKY), and 416-523 (ISNT…ERNS).

Microtubule inner protein component of sperm flagellar doublet microtubules. In terms of tissue distribution, expressed in trachea multiciliated cells.

The protein resides in the cytoplasm. The protein localises to the cytoskeleton. Its subcellular location is the cilium axoneme. It is found in the flagellum axoneme. In terms of biological role, microtubule inner protein (MIP) part of the dynein-decorated doublet microtubules (DMTs) in cilia axoneme, which is required for motile cilia beating. The polypeptide is EF-hand domain-containing family member C2 (EFHC2) (Bos taurus (Bovine)).